The sequence spans 389 residues: 26S proteasome non-ATPase regulatory subunit 6 (389 aa).

Positions 193-361 (DFKQAAELFL…EIVETNRPDS (169 aa)) constitute a PCI domain.

It belongs to the proteasome subunit S10 family. Component of the 19S proteasome regulatory particle complex. The 26S proteasome consists of a 20S core particle (CP) and two 19S regulatory subunits (RP). The regulatory particle is made of a lid composed of 9 subunits including PSMD6, a base containing 6 ATPases and few additional components.

Functionally, component of the 26S proteasome, a multiprotein complex involved in the ATP-dependent degradation of ubiquitinated proteins. This complex plays a key role in the maintenance of protein homeostasis by removing misfolded or damaged proteins, which could impair cellular functions, and by removing proteins whose functions are no longer required. Therefore, the proteasome participates in numerous cellular processes, including cell cycle progression, apoptosis, or DNA damage repair. The sequence is that of 26S proteasome non-ATPase regulatory subunit 6 (PSMD6) from Homo sapiens (Human).